A 526-amino-acid polypeptide reads, in one-letter code: UDP-glycosyltransferase UGT5 (526 aa).

The Lumenal segment spans residues 1–474; that stretch reads MIFFYFLTLT…TAAVDMPWYQ (474 aa). 3 N-linked (GlcNAc...) asparagine glycosylation sites follow: Asn49, Asn124, and Asn283. The helical transmembrane segment at 475-495 threads the bilayer; that stretch reads YLLLDVIAFLIFILVSVILII. Residues 496–526 lie on the Cytoplasmic side of the membrane; that stretch reads YYGVKISLRYLCALIFGNSSSLKPTKKVKDN.

Belongs to the UDP-glycosyltransferase family.

The protein resides in the microsome membrane. In terms of biological role, catalyzes the transfer of a glycosyl group from a UDP-sugar to an acceptor molecule. This Dactylopius coccus (Cochineal) protein is UDP-glycosyltransferase UGT5.